Reading from the N-terminus, the 453-residue chain is Cytochrome b-c1 complex subunit 2, mitochondrial (453 aa).

The N-terminal 14 residues, 1-14 (MKLLTRAGSFSRFY), are a transit peptide targeting the mitochondrion. Lysine 66, lysine 199, and lysine 250 each carry N6-acetyllysine.

This sequence belongs to the peptidase M16 family. UQCRC2/QCR2 subfamily. In terms of assembly, component of the ubiquinol-cytochrome c oxidoreductase (cytochrome b-c1 complex, complex III, CIII), a multisubunit enzyme composed of 11 subunits. The complex is composed of 3 respiratory subunits cytochrome b, cytochrome c1 and Rieske protein UQCRFS1, 2 core protein subunits UQCRC1/QCR1 and UQCRC2/QCR2, and 6 low-molecular weight protein subunits UQCRH/QCR6, UQCRB/QCR7, UQCRQ/QCR8, UQCR10/QCR9, UQCR11/QCR10 and subunit 9, the cleavage product of Rieske protein UQCRFS1. The complex exists as an obligatory dimer and forms supercomplexes (SCs) in the inner mitochondrial membrane with NADH-ubiquinone oxidoreductase (complex I, CI) and cytochrome c oxidase (complex IV, CIV), resulting in different assemblies (supercomplex SCI(1)III(2)IV(1) and megacomplex MCI(2)III(2)IV(2)). Interacts with RAB5IF. Interacts with STMP1.

It is found in the mitochondrion inner membrane. Component of the ubiquinol-cytochrome c oxidoreductase, a multisubunit transmembrane complex that is part of the mitochondrial electron transport chain which drives oxidative phosphorylation. The respiratory chain contains 3 multisubunit complexes succinate dehydrogenase (complex II, CII), ubiquinol-cytochrome c oxidoreductase (cytochrome b-c1 complex, complex III, CIII) and cytochrome c oxidase (complex IV, CIV), that cooperate to transfer electrons derived from NADH and succinate to molecular oxygen, creating an electrochemical gradient over the inner membrane that drives transmembrane transport and the ATP synthase. The cytochrome b-c1 complex catalyzes electron transfer from ubiquinol to cytochrome c, linking this redox reaction to translocation of protons across the mitochondrial inner membrane, with protons being carried across the membrane as hydrogens on the quinol. In the process called Q cycle, 2 protons are consumed from the matrix, 4 protons are released into the intermembrane space and 2 electrons are passed to cytochrome c. The 2 core subunits UQCRC1/QCR1 and UQCRC2/QCR2 are homologous to the 2 mitochondrial-processing peptidase (MPP) subunits beta-MPP and alpha-MPP respectively, and they seem to have preserved their MPP processing properties. May be involved in the in situ processing of UQCRFS1 into the mature Rieske protein and its mitochondrial targeting sequence (MTS)/subunit 9 when incorporated into complex III. The protein is Cytochrome b-c1 complex subunit 2, mitochondrial (UQCRC2) of Homo sapiens (Human).